A 125-amino-acid chain; its full sequence is Bublin coiled-coil protein (125 aa).

Residues 46-95 (IRKLDTQLDHLNDYMSKMEERLKAHNDRMMETLKQQKEEREKRRRSFHER) adopt a coiled-coil conformation. The disordered stretch occupies residues 79 to 125 (KQQKEEREKRRRSFHERMSQNQSEDEEFKKQMSSILKRVQSVKRTEK).

Expressed in many epithelial tissues, including the pharynx, intestine, excretory canal and hypodermis.

It is found in the cell junction. Its subcellular location is the cytoplasm. The protein localises to the cytoskeleton. Its function is as follows. Dynamic component of the endotube in intestinal cells, interacts with intermediate filament and regulates intestinal lumen morphology. This Caenorhabditis elegans protein is Bublin coiled-coil protein.